Reading from the N-terminus, the 368-residue chain is Repressor ROX1 (368 aa).

A DNA-binding region (HMG box) is located at residues 10 to 83 (IPRPKNAFIL…EHERKYPEYK (74 aa)). 2 disordered regions span residues 100–121 (IEQQ…QPQL) and 242–273 (SSQT…SSVL). Residues 102–121 (QQQQQQQKEQQQQKQSQPQL) show a composition bias toward low complexity.

Its subcellular location is the nucleus. Functionally, transcription factor that represses the expression of HEM13, COX5B, ANB1, CYC7 or AAC3 (hypoxic function). Binds to the DNA sequence 5'-RRRTAACAAGAG-3'. The sequence is that of Repressor ROX1 (ROX1) from Saccharomyces cerevisiae (strain ATCC 204508 / S288c) (Baker's yeast).